We begin with the raw amino-acid sequence, 269 residues long: Short-chain dehydrogenase/reductase ABA4 (269 aa).

NADP(+) is bound by residues Ile-34, Asp-80, Arg-144, Tyr-174, Lys-178, Ile-207, and Thr-209. The Proton donor role is filled by Tyr-174. Lys-178 (lowers pKa of active site Tyr) is an active-site residue.

The protein belongs to the short-chain dehydrogenases/reductases (SDR) family.

It functions in the pathway hormone biosynthesis. Its function is as follows. Short-chain dehydrogenase/reductase involved in the biosynthesis of abscisic acid (ABA), a phytohormone that acts antagonistically toward salicylic acid (SA), jasmonic acid (JA) and ethylene (ETH) signaling, to impede plant defense responses. During pathogen-host interaction, ABA plays a dual role in disease severity by increasing plant susceptibility and accelerating pathogenesis in the fungus itself. The first step of the pathway catalyzes the reaction from farnesyl diphosphate to alpha-ionylideneethane performed by the alpha-ionylideneethane synthase ABA3 via a three-step reaction mechanism involving 2 neutral intermediates, beta-farnesene and allofarnesene. The cytochrome P450 monooxygenase ABA1 might then be involved in the conversion of alpha-ionylideneethane to alpha-ionylideneacetic acid. Alpha-ionylideneacetic acid is further converted to abscisic acid in 2 steps involving the cytochrome P450 monooxygenase ABA2 and the short-chain dehydrogenase/reductase ABA4, via the intermediates 1'-deoxy-ABA or 1',4'-trans-diol-ABA, depending on the order of action of these 2 enzymes. ABA2 is responsible for the hydroxylation of carbon atom C-1' and ABA4 might be involved in the oxidation of the C-4' carbon atom. The sequence is that of Short-chain dehydrogenase/reductase ABA4 (ABA4) from Pyricularia oryzae (strain Y34) (Rice blast fungus).